Here is a 306-residue protein sequence, read N- to C-terminus: ClpXP adapter protein SpxH (306 aa).

This sequence belongs to the SpxH family. Interacts with Spx.

The protein resides in the cytoplasm. Functionally, adapter protein required for efficient degradation of Spx by ClpXP under non-stress conditions. Interaction with Spx stabilizes Spx and exposes the C-terminus of Spx for recognition and proteolysis by ClpXP. The sequence is that of ClpXP adapter protein SpxH from Halalkalibacterium halodurans (strain ATCC BAA-125 / DSM 18197 / FERM 7344 / JCM 9153 / C-125) (Bacillus halodurans).